We begin with the raw amino-acid sequence, 160 residues long: 3-hydroxyacyl-[acyl-carrier-protein] dehydratase FabZ (160 aa).

His-63 is a catalytic residue.

Belongs to the thioester dehydratase family. FabZ subfamily.

It localises to the cytoplasm. The catalysed reaction is a (3R)-hydroxyacyl-[ACP] = a (2E)-enoyl-[ACP] + H2O. In terms of biological role, involved in unsaturated fatty acids biosynthesis. Catalyzes the dehydration of short chain beta-hydroxyacyl-ACPs and long chain saturated and unsaturated beta-hydroxyacyl-ACPs. This Xylella fastidiosa (strain M12) protein is 3-hydroxyacyl-[acyl-carrier-protein] dehydratase FabZ.